A 186-amino-acid chain; its full sequence is Elongation factor P (186 aa).

It belongs to the elongation factor P family.

It localises to the cytoplasm. The protein operates within protein biosynthesis; polypeptide chain elongation. Involved in peptide bond synthesis. Stimulates efficient translation and peptide-bond synthesis on native or reconstituted 70S ribosomes in vitro. Probably functions indirectly by altering the affinity of the ribosome for aminoacyl-tRNA, thus increasing their reactivity as acceptors for peptidyl transferase. This is Elongation factor P from Neisseria gonorrhoeae (strain NCCP11945).